A 363-amino-acid polypeptide reads, in one-letter code: Phospho-N-acetylmuramoyl-pentapeptide-transferase (363 aa).

Transmembrane regions (helical) follow at residues 3–23 (QILF…PLLI), 48–68 (GTPT…YFLA), 83–103 (PTFS…VGFL), 121–141 (AKMI…LQFA), 159–179 (FGWT…ILAM), 192–212 (LATG…VWQF), 234–254 (PLDL…FLWW), 261–281 (IFMG…LAIC), 286–306 (LLMA…VIQV), and 340–360 (FWII…AGWA).

Belongs to the glycosyltransferase 4 family. MraY subfamily. Mg(2+) is required as a cofactor.

Its subcellular location is the cell membrane. It catalyses the reaction UDP-N-acetyl-alpha-D-muramoyl-L-alanyl-gamma-D-glutamyl-meso-2,6-diaminopimeloyl-D-alanyl-D-alanine + di-trans,octa-cis-undecaprenyl phosphate = di-trans,octa-cis-undecaprenyl diphospho-N-acetyl-alpha-D-muramoyl-L-alanyl-D-glutamyl-meso-2,6-diaminopimeloyl-D-alanyl-D-alanine + UMP. It participates in cell wall biogenesis; peptidoglycan biosynthesis. Functionally, catalyzes the initial step of the lipid cycle reactions in the biosynthesis of the cell wall peptidoglycan: transfers peptidoglycan precursor phospho-MurNAc-pentapeptide from UDP-MurNAc-pentapeptide onto the lipid carrier undecaprenyl phosphate, yielding undecaprenyl-pyrophosphoryl-MurNAc-pentapeptide, known as lipid I. The sequence is that of Phospho-N-acetylmuramoyl-pentapeptide-transferase from Streptomyces coelicolor (strain ATCC BAA-471 / A3(2) / M145).